The sequence spans 223 residues: Type 3 secretion system stator protein (223 aa).

The protein belongs to the SctL stator family. In terms of assembly, the core secretion machinery of the T3SS is composed of approximately 20 different proteins, including cytoplasmic components, a base, an export apparatus and a needle. This subunit is part of the cytosolic complex. Interacts directly with YscN/SctN (T3SS ATPase) and YscQ/SctQ (the major sorting platform component). Forms homodimers.

It is found in the cytoplasm. In terms of biological role, component of the type III secretion system (T3SS), also called injectisome, which is used to inject bacterial effector proteins into eukaryotic host cells. Acts as a regulator of the YscN/SctN ATPase activity. Overexpression of YscL/SctL abolishes type III secretion and down-regulates the expression of secretion apparatus components. This chain is Type 3 secretion system stator protein, found in Yersinia enterocolitica.